Reading from the N-terminus, the 472-residue chain is 2-methylcitrate synthase, mitochondrial (472 aa).

Residues 1–29 (MALNLTTSRRALGSLKPLTRAAFVGARGY) constitute a mitochondrion transit peptide. 2 residues coordinate CoA: Arg75 and Lys193. His271 provides a ligand contact to oxaloacetate. Residue Leu306 coordinates CoA. His307 is an active-site residue. CoA contacts are provided by Val348, Gly350, and Tyr351. Oxaloacetate is bound by residues His353 and Arg362. His353 is a catalytic residue. CoA contacts are provided by Thr402, Lys403, and Asn408. Asp410 is an active-site residue. 2 residues coordinate oxaloacetate: Arg436 and Arg456.

It belongs to the citrate synthase family. In terms of assembly, homodimer.

It localises to the mitochondrion matrix. The enzyme catalyses propanoyl-CoA + oxaloacetate + H2O = (2S,3S)-2-methylcitrate + CoA + H(+). It carries out the reaction oxaloacetate + acetyl-CoA + H2O = citrate + CoA + H(+). It functions in the pathway organic acid metabolism; propanoate degradation. Functionally, component of the methylcitrate cycle that catalyzes the synthesis of (2S,3S)-2-methylcitrate from propionyl-CoA and oxaloacetate. Plays an important role in detoxification of propionyl-CoA, an inhibitor of both primary and secondary metabolism. Also has citrate synthase activity using as substrates acetyl-CoA and oxaloacetate. This is 2-methylcitrate synthase, mitochondrial from Fusarium solani (Filamentous fungus).